Here is a 460-residue protein sequence, read N- to C-terminus: Probable serine/threonine-protein kinase kinase DDB_G0280557 (460 aa).

Residues 102-416 (INLKSITDCG…IDQLLAHKYF (315 aa)) enclose the Protein kinase domain. ATP-binding positions include lysine 131 and 154–162 (QRHFQQHPL). Aspartate 250 acts as the Proton acceptor in catalysis.

The protein belongs to the protein kinase superfamily. CMGC Ser/Thr protein kinase family. MAP kinase subfamily.

The catalysed reaction is L-seryl-[protein] + ATP = O-phospho-L-seryl-[protein] + ADP + H(+). The enzyme catalyses L-threonyl-[protein] + ATP = O-phospho-L-threonyl-[protein] + ADP + H(+). The sequence is that of Probable serine/threonine-protein kinase kinase DDB_G0280557 from Dictyostelium discoideum (Social amoeba).